A 423-amino-acid polypeptide reads, in one-letter code: Imidazolonepropionase (423 aa).

Fe(3+)-binding residues include H78 and H80. Zn(2+)-binding residues include H78 and H80. Residues R87, Y150, and H183 each coordinate 4-imidazolone-5-propanoate. Y150 provides a ligand contact to N-formimidoyl-L-glutamate. H247 serves as a coordination point for Fe(3+). Zn(2+) is bound at residue H247. Residue E250 coordinates 4-imidazolone-5-propanoate. Fe(3+) is bound at residue D322. D322 is a Zn(2+) binding site. Residues N324 and G326 each coordinate N-formimidoyl-L-glutamate. S327 lines the 4-imidazolone-5-propanoate pocket.

Belongs to the metallo-dependent hydrolases superfamily. HutI family. The cofactor is Zn(2+). Requires Fe(3+) as cofactor.

Its subcellular location is the cytoplasm. It catalyses the reaction 4-imidazolone-5-propanoate + H2O = N-formimidoyl-L-glutamate. It participates in amino-acid degradation; L-histidine degradation into L-glutamate; N-formimidoyl-L-glutamate from L-histidine: step 3/3. In terms of biological role, catalyzes the hydrolytic cleavage of the carbon-nitrogen bond in imidazolone-5-propanoate to yield N-formimidoyl-L-glutamate. It is the third step in the universal histidine degradation pathway. The protein is Imidazolonepropionase of Bacillus thuringiensis (strain Al Hakam).